We begin with the raw amino-acid sequence, 518 residues long: Glutamate--cysteine ligase (518 aa).

It belongs to the glutamate--cysteine ligase type 1 family. Type 1 subfamily.

It catalyses the reaction L-cysteine + L-glutamate + ATP = gamma-L-glutamyl-L-cysteine + ADP + phosphate + H(+). The protein operates within sulfur metabolism; glutathione biosynthesis; glutathione from L-cysteine and L-glutamate: step 1/2. The protein is Glutamate--cysteine ligase of Shigella sonnei (strain Ss046).